We begin with the raw amino-acid sequence, 838 residues long: Protein P (838 aa).

The tract at residues 1 to 177 (MPLSYQHFRK…FCGSPYSWEQ (177 aa)) is terminal protein domain (TP). The tract at residues 178-341 (ELQHQTSTRH…YCLTHIVNLL (164 aa)) is spacer. Disordered regions lie at residues 215–238 (QSRL…SGSI) and 285–311 (STSK…RSQS). Residues 285 to 294 (STSKRQSSSG) show a composition bias toward polar residues. Residues 342–685 (EDWGPCTEHG…YLHLYPVARQ (344 aa)) are polymerase/reverse transcriptase domain (RT). Residues 352 to 595 (EHNIRIPRTP…YSLNFMGYVI (244 aa)) enclose the Reverse transcriptase domain. Mg(2+) contacts are provided by Asp424, Asp546, and Asp547.

The protein belongs to the hepadnaviridae P protein family.

It carries out the reaction DNA(n) + a 2'-deoxyribonucleoside 5'-triphosphate = DNA(n+1) + diphosphate. It catalyses the reaction Endonucleolytic cleavage to 5'-phosphomonoester.. Activated by host HSP70 and HSP40 in vitro to be able to bind the epsilon loop of the pgRNA. Because deletion of the RNase H region renders the protein partly chaperone-independent, the chaperones may be needed indirectly to relieve occlusion of the RNA-binding site by this domain. Inhibited by several reverse-transcriptase inhibitors: Lamivudine, Adefovir and Entecavir. Multifunctional enzyme that converts the viral RNA genome into dsDNA in viral cytoplasmic capsids. This enzyme displays a DNA polymerase activity that can copy either DNA or RNA templates, and a ribonuclease H (RNase H) activity that cleaves the RNA strand of RNA-DNA heteroduplexes in a partially processive 3'- to 5'-endonucleasic mode. Neo-synthesized pregenomic RNA (pgRNA) are encapsidated together with the P protein, and reverse-transcribed inside the nucleocapsid. Initiation of reverse-transcription occurs first by binding the epsilon loop on the pgRNA genome, and is initiated by protein priming, thereby the 5'-end of (-)DNA is covalently linked to P protein. Partial (+)DNA is synthesized from the (-)DNA template and generates the relaxed circular DNA (RC-DNA) genome. After budding and infection, the RC-DNA migrates in the nucleus, and is converted into a plasmid-like covalently closed circular DNA (cccDNA). The activity of P protein does not seem to be necessary for cccDNA generation, and is presumably released from (+)DNA by host nuclear DNA repair machinery. The protein is Protein P of Homo sapiens (Human).